Reading from the N-terminus, the 506-residue chain is ATP synthase subunit alpha, chloroplastic (506 aa).

170–177 (GDRQTGKT) contacts ATP.

This sequence belongs to the ATPase alpha/beta chains family. As to quaternary structure, F-type ATPases have 2 components, CF(1) - the catalytic core - and CF(0) - the membrane proton channel. CF(1) has five subunits: alpha(3), beta(3), gamma(1), delta(1), epsilon(1). CF(0) has four main subunits: a, b, b' and c.

It is found in the plastid. It localises to the chloroplast thylakoid membrane. It catalyses the reaction ATP + H2O + 4 H(+)(in) = ADP + phosphate + 5 H(+)(out). Functionally, produces ATP from ADP in the presence of a proton gradient across the membrane. The alpha chain is a regulatory subunit. In Chlorokybus atmophyticus (Soil alga), this protein is ATP synthase subunit alpha, chloroplastic.